The sequence spans 423 residues: MTDIVDELKWRGLFAQSTDEDALRKALADGPVTFYCGFDPTAASLHVGHLVQVLTMRRLQQAGLKPLALVGGATGQIGDPRPTAERTLNDPETIAAWVQRLRGQIEPFLTFEGPNAATMVNNLDWTAGMSAIEFLRDIGKHFRVNKMLTKDSVARRLESQEGISYTEFSYQLLQGMDFLELYRRHGCTLQQGGSDQWGNLTAGIDLIHRLEPGAVVHALATPLMTKADGTKFGKSESGAVWLDPEMTTPYAFYQFWLNVDDRDVSRYLRILSFKSREELAELEKLTEERPQARNAQRALAEELTTLVHGGEQCAAVIAASKALFGQGDLAELDEATLSAALSEVPHATVAELGPLVDLLVEVGLAPSKSGARRTVKEGGAYVNNVKVVDGEVAPDAGELLHGRWLVLRRGKKNLAAVEVGPVG.

Tyrosine 35 is an L-tyrosine binding site. Positions 40-49 (PTAASLHVGH) match the 'HIGH' region motif. The L-tyrosine site is built by tyrosine 170 and glutamine 174. A 'KMSKS' region motif is present at residues 231–235 (KFGKS). Residue lysine 234 participates in ATP binding. The 67-residue stretch at 353–419 (GPLVDLLVEV…GKKNLAAVEV (67 aa)) folds into the S4 RNA-binding domain.

It belongs to the class-I aminoacyl-tRNA synthetase family. TyrS type 1 subfamily. Homodimer.

The protein resides in the cytoplasm. It catalyses the reaction tRNA(Tyr) + L-tyrosine + ATP = L-tyrosyl-tRNA(Tyr) + AMP + diphosphate + H(+). Catalyzes the attachment of tyrosine to tRNA(Tyr) in a two-step reaction: tyrosine is first activated by ATP to form Tyr-AMP and then transferred to the acceptor end of tRNA(Tyr). In Streptomyces griseus subsp. griseus (strain JCM 4626 / CBS 651.72 / NBRC 13350 / KCC S-0626 / ISP 5235), this protein is Tyrosine--tRNA ligase.